The sequence spans 460 residues: Serine incorporator 5 (460 aa).

Residues 1–36 (MCTPCCVSQLACCCGSAACSLCCGCCPKIKQSTSTR) are Extracellular-facing. A helical transmembrane segment spans residues 37-57 (FMYALFFMLVTVTCVIMMSPT). Residues 58-89 (VEMAMREHIPFYSQMCQQLNAGENCSTLVGYS) lie on the Cytoplasmic side of the membrane. Residues 90–110 (AVYKVCFGMACFFFFFAVFTI) form a helical membrane-spanning segment. At 111–124 (RVQNSTGCRAAVHN) the chain is on the extracellular side. Asparagine 114 carries N-linked (GlcNAc...) asparagine glycosylation. A helical membrane pass occupies residues 125–145 (GFWFFKFVALLACCAGGFFLP). Residues 146–156 (NQDQFLEVWRY) lie on the Cytoplasmic side of the membrane. A helical transmembrane segment spans residues 157–177 (VGAAGGFLFIIIQLMLLVQFA). Over 178-197 (HRWNQNWSSGATYNKLWYAA) the chain is Extracellular. The N-linked (GlcNAc...) asparagine glycan is linked to asparagine 183. A helical transmembrane segment spans residues 198–218 (LALVTLVLFSVAVGGMVFMFM). At 219-230 (YYTHPEACFLNK) the chain is on the cytoplasmic side. Residues 231-251 (IFLGVNGGLCFIVSLLAISPC) traverse the membrane as a helical segment. Residues 252 to 259 (IQTFQPTS) lie on the Extracellular side of the membrane. The chain crosses the membrane as a helical span at residues 260-280 (GLLQPAVITLYVMYLTFSALA). At 281 to 311 (SKPIEMVEDEIKGNITVCVFPFKSGLKSDTN) the chain is on the cytoplasmic side. Residues 312 to 332 (IVTGVGTAILFCCILYSCLIS) form a helical membrane-spanning segment. The Extracellular portion of the chain corresponds to 333–391 (TTKRSSAALQVYRNDMPENERARCCFCWVDDTEDYDDEKTSGGQNVKYDERDGTVYSYC). A helical transmembrane segment spans residues 392-412 (FFHFVFFLGSLYVMMTVTNWF). The Cytoplasmic portion of the chain corresponds to 413–433 (HYDNAKIERLLEGSWSVFWIK). Residues 434–454 (MASSWVCLFFYMWTLVVPMLF) traverse the membrane as a helical segment. Over 455–460 (PQRFQA) the chain is Extracellular.

The protein belongs to the TDE1 family.

Its subcellular location is the cell membrane. The enzyme catalyses a 1,2-diacyl-sn-glycero-3-phospho-L-serine(in) = a 1,2-diacyl-sn-glycero-3-phospho-L-serine(out). It catalyses the reaction a 1,2-diacyl-sn-glycero-3-phosphocholine(in) = a 1,2-diacyl-sn-glycero-3-phosphocholine(out). It carries out the reaction a 1,2-diacyl-sn-glycero-3-phosphoethanolamine(in) = a 1,2-diacyl-sn-glycero-3-phosphoethanolamine(out). In terms of biological role, restriction factor required to restrict infectivity of gammaretroviruses: acts by inhibiting an early step of viral infection. Impairs the penetration of the viral particle into the cytoplasm. Non-ATP-dependent, non-specific lipid transporter for phosphatidylserine, phosphatidylcholine, and phosphatidylethanolamine. Functions as a scramblase that flips lipids in both directions across the membrane. Phospholipid scrambling results in gammaretroviral surface exposure of phosphatidylserine and loss of membrane asymmetry, which leads to loss of infectivity. Enhances the incorporation of serine into phosphatidylserine and sphingolipids. This is Serine incorporator 5 (serinc5) from Danio rerio (Zebrafish).